The primary structure comprises 162 residues: NADH-quinone oxidoreductase subunit I 1 (162 aa).

2 consecutive 4Fe-4S ferredoxin-type domains span residues 52–82 and 93–122; these read LRRY…IEAG and VRYD…EGPN. 8 residues coordinate [4Fe-4S] cluster: Cys62, Cys65, Cys68, Cys72, Cys102, Cys105, Cys108, and Cys112.

The protein belongs to the complex I 23 kDa subunit family. In terms of assembly, NDH-1 is composed of 14 different subunits. Subunits NuoA, H, J, K, L, M, N constitute the membrane sector of the complex. [4Fe-4S] cluster serves as cofactor.

It is found in the cell inner membrane. The catalysed reaction is a quinone + NADH + 5 H(+)(in) = a quinol + NAD(+) + 4 H(+)(out). Functionally, NDH-1 shuttles electrons from NADH, via FMN and iron-sulfur (Fe-S) centers, to quinones in the respiratory chain. The immediate electron acceptor for the enzyme in this species is believed to be ubiquinone. Couples the redox reaction to proton translocation (for every two electrons transferred, four hydrogen ions are translocated across the cytoplasmic membrane), and thus conserves the redox energy in a proton gradient. The protein is NADH-quinone oxidoreductase subunit I 1 of Rhodopseudomonas palustris (strain ATCC BAA-98 / CGA009).